The following is a 343-amino-acid chain: Uroporphyrinogen decarboxylase (343 aa).

Residues 23–27, D73, Y151, S206, and H319 contribute to the substrate site; that span reads RQAGR.

Belongs to the uroporphyrinogen decarboxylase family. In terms of assembly, homodimer.

It is found in the cytoplasm. It carries out the reaction uroporphyrinogen III + 4 H(+) = coproporphyrinogen III + 4 CO2. Its pathway is porphyrin-containing compound metabolism; protoporphyrin-IX biosynthesis; coproporphyrinogen-III from 5-aminolevulinate: step 4/4. Its function is as follows. Catalyzes the decarboxylation of four acetate groups of uroporphyrinogen-III to yield coproporphyrinogen-III. This Sulfurimonas denitrificans (strain ATCC 33889 / DSM 1251) (Thiomicrospira denitrificans (strain ATCC 33889 / DSM 1251)) protein is Uroporphyrinogen decarboxylase.